The primary structure comprises 34 residues: Ribonuclease PL1 (34 aa).

N-linked (GlcNAc...) asparagine; partial glycosylation is present at N4. The Proton acceptor role is filled by H15.

This sequence belongs to the pancreatic ribonuclease family.

Its subcellular location is the lysosome. It catalyses the reaction an [RNA] containing cytidine + H2O = an [RNA]-3'-cytidine-3'-phosphate + a 5'-hydroxy-ribonucleotide-3'-[RNA].. The enzyme catalyses an [RNA] containing uridine + H2O = an [RNA]-3'-uridine-3'-phosphate + a 5'-hydroxy-ribonucleotide-3'-[RNA].. This chain is Ribonuclease PL1, found in Sus scrofa (Pig).